The chain runs to 339 residues: Outer membrane protein assembly factor BamC (339 aa).

The N-terminal stretch at 1–19 (MKFSRQLVLGSLAVLVLSA) is a signal peptide. Cys-20 carries the N-palmitoyl cysteine lipid modification. Cys-20 carries the S-diacylglycerol cysteine lipid modification.

It belongs to the BamC family. As to quaternary structure, part of the Bam complex.

The protein resides in the cell outer membrane. Part of the outer membrane protein assembly complex, which is involved in assembly and insertion of beta-barrel proteins into the outer membrane. The polypeptide is Outer membrane protein assembly factor BamC (Vibrio cholerae serotype O1 (strain ATCC 39315 / El Tor Inaba N16961)).